The following is a 1877-amino-acid chain: Proprotein convertase subtilisin/kexin type 5 (1877 aa).

The first 34 residues, Met1–Thr34, serve as a signal peptide directing secretion. A propeptide spanning residues Arg35–Arg116 is cleaved from the precursor. Topologically, residues Asp117 to Thr1768 are extracellular. The Peptidase S8 domain occupies Met136–Val455. Catalysis depends on charge relay system residues Asp173 and His214. Asn227 and Asn383 each carry an N-linked (GlcNAc...) asparagine glycan. Ser388 serves as the catalytic Charge relay system. Residues Thr463–Gln603 enclose the P/Homo B domain. A Cell attachment site motif is present at residues Arg521–Asp523. 22 FU repeats span residues Glu632–His682, Lys685–Glu732, Lys736–Phe779, Gly781–Leu826, Tyr834–Ile881, Gln884–Glu929, Lys931–Pro981, Gly984–Gln1030, Tyr1034–Gly1079, Lys1081–Gly1123, Leu1127–Pro1168, Thr1206–Pro1248, Ser1252–Ala1299, Asp1301–Ala1345, Glu1347–Pro1390, Met1392–Lys1438, Asn1442–Trp1487, Ser1491–Thr1536, Ser1540–Gly1585, Ser1589–Ala1636, Ala1640–Arg1685, and Asn1691–Arg1738. Positions Cys638–Cys1753 are CRM (Cys-rich motif). Residue Asn667 is glycosylated (N-linked (GlcNAc...) asparagine). Residues Asn754, Asn804, and Asn854 are each glycosylated (N-linked (GlcNAc...) asparagine). 2 N-linked (GlcNAc...) asparagine glycosylation sites follow: Asn951 and Asn1016. N-linked (GlcNAc...) asparagine glycosylation occurs at Asn1220. Asn1317 is a glycosylation site (N-linked (GlcNAc...) asparagine). N-linked (GlcNAc...) asparagine glycosylation occurs at Asn1523. N-linked (GlcNAc...) asparagine glycans are attached at residues Asn1711 and Asn1733. A helical membrane pass occupies residues Ala1769–Trp1789. Residues Arg1790 to Gln1877 are Cytoplasmic-facing. AC stretches follow at residues Val1825–Met1844 and Tyr1856–Gln1877.

The protein belongs to the peptidase S8 family. PC5A is expressed in most tissues but is most abundant in the intestine and adrenals. PC5B is expressed in the intestine, adrenals and lung but not in the brain.

Its subcellular location is the secreted. The protein resides in the endomembrane system. Functionally, serine endoprotease that processes various proproteins by cleavage at paired basic amino acids, recognizing the RXXX[KR]R consensus motif. Likely functions in the constitutive and regulated secretory pathways. Plays an essential role in pregnancy establishment by proteolytic activation of a number of important factors such as BMP2, CALD1 and alpha-integrins. May be responsible for the maturation of gastrointestinal peptides. May be involved in the cellular proliferation of adrenal cortex via the activation of growth factors. This is Proprotein convertase subtilisin/kexin type 5 (Pcsk5) from Mus musculus (Mouse).